The chain runs to 601 residues: Somatic embryogenesis receptor kinase 5 (601 aa).

The N-terminal stretch at 1 to 24 is a signal peptide; it reads MEHGSSRGFIWLILFLDFVSRVTG. Residues 25-215 lie on the Extracellular side of the membrane; the sequence is KTQVDALIAL…SPSPSPSGTS (191 aa). N52, N81, N105, N129, N151, and N184 each carry an N-linked (GlcNAc...) asparagine glycan. LRR repeat units follow at residues 71-94, 95-118, 119-141, 143-165, and 166-188; these read SVTR…AQLP, NLQY…GDLM, ELVS…LGKL, KLRF…LTAL, and PLDV…GSFS. A helical membrane pass occupies residues 216–236; sequence AAIVVGVAAGAALLFALAWWL. Residues 237–601 lie on the Cytoplasmic side of the membrane; sequence RRKLQGHFLD…IENDYPSGPR (365 aa). Residue T272 is modified to Phosphothreonine. The region spanning 275–572 is the Protein kinase domain; that stretch reads FSKRNVLGKG…KEEMPIHDFN (298 aa). 281–289 is a binding site for ATP; the sequence is LGKGRFGIL. The residue at position 298 (T298) is a Phosphothreonine. An ATP-binding site is contributed by K303. S356 and S359 each carry phosphoserine. D402 functions as the Proton acceptor in the catalytic mechanism. T435, T436, and T441 each carry phosphothreonine. Y449 is subject to Phosphotyrosine. S451 is modified (phosphoserine). T452 bears the Phosphothreonine mark. S456 and S506 each carry phosphoserine. A Phosphothreonine modification is found at T532.

This sequence belongs to the protein kinase superfamily. Ser/Thr protein kinase family. In terms of assembly, interacts with TMK4/BARK1. In terms of processing, autophosphorylated.

It localises to the cell membrane. It catalyses the reaction L-seryl-[protein] + ATP = O-phospho-L-seryl-[protein] + ADP + H(+). The enzyme catalyses L-threonyl-[protein] + ATP = O-phospho-L-threonyl-[protein] + ADP + H(+). Serine/threonine-kinase of unknown function. This chain is Somatic embryogenesis receptor kinase 5 (SERK5), found in Arabidopsis thaliana (Mouse-ear cress).